We begin with the raw amino-acid sequence, 207 residues long: Uracil phosphoribosyltransferase (207 aa).

Residues Arg77, Arg102, and 129-137 (DPMLATGGS) each bind 5-phospho-alpha-D-ribose 1-diphosphate. Uracil-binding positions include Ile192 and 197 to 199 (GDA). Residue Asp198 coordinates 5-phospho-alpha-D-ribose 1-diphosphate.

This sequence belongs to the UPRTase family. It depends on Mg(2+) as a cofactor.

The catalysed reaction is UMP + diphosphate = 5-phospho-alpha-D-ribose 1-diphosphate + uracil. It functions in the pathway pyrimidine metabolism; UMP biosynthesis via salvage pathway; UMP from uracil: step 1/1. With respect to regulation, allosterically activated by GTP. Its function is as follows. Catalyzes the conversion of uracil and 5-phospho-alpha-D-ribose 1-diphosphate (PRPP) to UMP and diphosphate. The chain is Uracil phosphoribosyltransferase from Dictyoglomus turgidum (strain DSM 6724 / Z-1310).